A 611-amino-acid chain; its full sequence is Putative clathrin assembly protein At4g02650 (611 aa).

An ENTH domain is found at 26–162; it reads GRSSSLTELE…DYRMQGRRGK (137 aa). Disordered regions lie at residues 158–184 and 337–406; these read GRRG…HRGT and TTKS…GDLL. The span at 386-401 shows a compositional bias: basic and acidic residues; that stretch reads METKKDVEEVVSRQDQ.

It localises to the membrane. Its subcellular location is the clathrin-coated pit. It is found in the golgi apparatus. The protein localises to the cytoplasmic vesicle. The protein resides in the clathrin-coated vesicle. This chain is Putative clathrin assembly protein At4g02650, found in Arabidopsis thaliana (Mouse-ear cress).